A 582-amino-acid chain; its full sequence is Kelch-like protein diablo (582 aa).

The interval 1-22 (MGDVLISDRPPSPARLSHTSEK) is disordered. The BTB domain maps to 41-108 (CDVVINVSGR…CYTSHIVVEE (68 aa)). Residues 143–245 (CLGIRAFADT…SPKFLVGTVG (103 aa)) enclose the BACK domain. Kelch repeat units lie at residues 292–338 (VLFA…VLND), 340–386 (LYAV…VLDG), 387–433 (FLYA…VLGG), 435–480 (LYAI…VFNN), 482–527 (IYAV…VVNG), and 528–574 (QLYA…VMRA).

It participates in protein modification; protein ubiquitination. In terms of biological role, probable substrate-specific adapter of an E3 ubiquitin-protein ligase complex which mediates the ubiquitination and subsequent proteasomal degradation of target proteins. May have a role in synapse differentiation and growth. The chain is Kelch-like protein diablo from Culex quinquefasciatus (Southern house mosquito).